The primary structure comprises 590 residues: Arginine--tRNA ligase (590 aa).

Residues 132–142 (PNTNKPLHLGH) carry the 'HIGH' region motif.

Belongs to the class-I aminoacyl-tRNA synthetase family. In terms of assembly, monomer.

It localises to the cytoplasm. It catalyses the reaction tRNA(Arg) + L-arginine + ATP = L-arginyl-tRNA(Arg) + AMP + diphosphate. The sequence is that of Arginine--tRNA ligase from Treponema denticola (strain ATCC 35405 / DSM 14222 / CIP 103919 / JCM 8153 / KCTC 15104).